We begin with the raw amino-acid sequence, 272 residues long: 3-methyl-2-oxobutanoate hydroxymethyltransferase (272 aa).

Residues Asp-51 and Asp-90 each coordinate Mg(2+). Residues 51–52 (DS), Asp-90, and Lys-118 each bind 3-methyl-2-oxobutanoate. Mg(2+) is bound at residue Glu-120. Glu-187 functions as the Proton acceptor in the catalytic mechanism.

This sequence belongs to the PanB family. Homodecamer; pentamer of dimers. Requires Mg(2+) as cofactor.

Its subcellular location is the cytoplasm. The catalysed reaction is 3-methyl-2-oxobutanoate + (6R)-5,10-methylene-5,6,7,8-tetrahydrofolate + H2O = 2-dehydropantoate + (6S)-5,6,7,8-tetrahydrofolate. Its pathway is cofactor biosynthesis; (R)-pantothenate biosynthesis; (R)-pantoate from 3-methyl-2-oxobutanoate: step 1/2. Catalyzes the reversible reaction in which hydroxymethyl group from 5,10-methylenetetrahydrofolate is transferred onto alpha-ketoisovalerate to form ketopantoate. The sequence is that of 3-methyl-2-oxobutanoate hydroxymethyltransferase from Xylella fastidiosa (strain M12).